The following is a 173-amino-acid chain: uncharacterized protein (173 aa).

This is an uncharacterized protein from Rhodospirillum rubrum.